Reading from the N-terminus, the 261-residue chain is Zinc import ATP-binding protein ZnuC (261 aa).

The ABC transporter domain occupies 5–220 (ISLKALSVTF…PSYIALFGSA (216 aa)). An ATP-binding site is contributed by 37–44 (GPNGAGKS). The interval 236–261 (HHDLAGQPVSGDATQCNHHHHGHHHD) is disordered. The span at 252 to 261 (NHHHHGHHHD) shows a compositional bias: basic residues.

This sequence belongs to the ABC transporter superfamily. Zinc importer (TC 3.A.1.15.5) family. The complex is composed of two ATP-binding proteins (ZnuC), two transmembrane proteins (ZnuB) and a solute-binding protein (ZnuA).

The protein localises to the cell inner membrane. It carries out the reaction Zn(2+)(out) + ATP(in) + H2O(in) = Zn(2+)(in) + ADP(in) + phosphate(in) + H(+)(in). Its function is as follows. Part of the ABC transporter complex ZnuABC involved in zinc import. Responsible for energy coupling to the transport system. The protein is Zinc import ATP-binding protein ZnuC of Vibrio vulnificus (strain CMCP6).